The primary structure comprises 454 residues: uncharacterized protein (454 aa).

The HNH domain maps to 364 to 405 (CSRPGCDAPAYHSEVHHVTPWTTTHRTDINDLTLACGPDNRL).

Belongs to the Rv1128c/1148c/1588c/1702c/1945/3466 family.

This is an uncharacterized protein from Mycobacterium tuberculosis (strain ATCC 25618 / H37Rv).